The primary structure comprises 195 residues: Thymidine kinase (195 aa).

ATP contacts are provided by residues 15–22 (GSMFSGKS) and 88–91 (DEVQ). The active-site Proton acceptor is Glu89. Cys145, Cys148, Cys183, and Cys186 together coordinate Zn(2+).

This sequence belongs to the thymidine kinase family. As to quaternary structure, homotetramer.

It is found in the cytoplasm. The catalysed reaction is thymidine + ATP = dTMP + ADP + H(+). The sequence is that of Thymidine kinase from Bacillus cereus (strain ZK / E33L).